A 483-amino-acid polypeptide reads, in one-letter code: Aspartyl/glutamyl-tRNA(Asn/Gln) amidotransferase subunit B (483 aa).

This sequence belongs to the GatB/GatE family. GatB subfamily. In terms of assembly, heterotrimer of A, B and C subunits.

The enzyme catalyses L-glutamyl-tRNA(Gln) + L-glutamine + ATP + H2O = L-glutaminyl-tRNA(Gln) + L-glutamate + ADP + phosphate + H(+). It catalyses the reaction L-aspartyl-tRNA(Asn) + L-glutamine + ATP + H2O = L-asparaginyl-tRNA(Asn) + L-glutamate + ADP + phosphate + 2 H(+). Allows the formation of correctly charged Asn-tRNA(Asn) or Gln-tRNA(Gln) through the transamidation of misacylated Asp-tRNA(Asn) or Glu-tRNA(Gln) in organisms which lack either or both of asparaginyl-tRNA or glutaminyl-tRNA synthetases. The reaction takes place in the presence of glutamine and ATP through an activated phospho-Asp-tRNA(Asn) or phospho-Glu-tRNA(Gln). The sequence is that of Aspartyl/glutamyl-tRNA(Asn/Gln) amidotransferase subunit B from Marinobacter nauticus (strain ATCC 700491 / DSM 11845 / VT8) (Marinobacter aquaeolei).